Consider the following 198-residue polypeptide: Recombination protein RecR (198 aa).

The segment at 56–71 (CEICGNVSEQATCSIC) adopts a C4-type zinc-finger fold. Residues 79–174 (ALICVVEEAK…RVTRLASGLP (96 aa)) form the Toprim domain.

This sequence belongs to the RecR family.

May play a role in DNA repair. It seems to be involved in an RecBC-independent recombinational process of DNA repair. It may act with RecF and RecO. The sequence is that of Recombination protein RecR from Leifsonia xyli subsp. xyli (strain CTCB07).